A 536-amino-acid chain; its full sequence is Putative ATP-dependent RNA helicase L364 (536 aa).

The Helicase ATP-binding domain maps to Ile-47 to Pro-214. Ser-60–Thr-67 is an ATP binding site. The DEAH box motif lies at Asp-160 to His-163. The stretch at Leu-288–Lys-334 forms a coiled coil. In terms of domain architecture, Helicase C-terminal spans Phe-338–Glu-486. A disordered region spans residues Val-502–Val-536.

Belongs to the DEAD box helicase family. DEAH subfamily.

The catalysed reaction is ATP + H2O = ADP + phosphate + H(+). The chain is Putative ATP-dependent RNA helicase L364 from Acanthamoeba polyphaga (Amoeba).